The following is a 494-amino-acid chain: Probable cobyric acid synthase (494 aa).

In terms of domain architecture, GATase cobBQ-type spans 249–447; the sequence is SVRIAVIRLP…LHGIFFNRRF (199 aa). The active-site Nucleophile is the C331. The active site involves H439.

This sequence belongs to the CobB/CobQ family. CobQ subfamily.

Its pathway is cofactor biosynthesis; adenosylcobalamin biosynthesis. In terms of biological role, catalyzes amidations at positions B, D, E, and G on adenosylcobyrinic A,C-diamide. NH(2) groups are provided by glutamine, and one molecule of ATP is hydrogenolyzed for each amidation. This Methanopyrus kandleri (strain AV19 / DSM 6324 / JCM 9639 / NBRC 100938) protein is Probable cobyric acid synthase.